Consider the following 318-residue polypeptide: tRNA uridine(34) hydroxylase (318 aa).

In terms of domain architecture, Rhodanese spans 125–219 (QDPNTVVIDA…YGTSKDTEGK (95 aa)). The active-site Cysteine persulfide intermediate is the C179.

Belongs to the TrhO family.

It catalyses the reaction uridine(34) in tRNA + AH2 + O2 = 5-hydroxyuridine(34) in tRNA + A + H2O. Its function is as follows. Catalyzes oxygen-dependent 5-hydroxyuridine (ho5U) modification at position 34 in tRNAs. The protein is tRNA uridine(34) hydroxylase of Acholeplasma laidlawii (strain PG-8A).